The primary structure comprises 129 residues: Large ribosomal subunit protein bL21 (129 aa).

The segment at 102–129 (TDNAKPTKGPRPKKEKVAKEATKEDAAA) is disordered. Positions 116-129 (EKVAKEATKEDAAA) are enriched in basic and acidic residues.

Belongs to the bacterial ribosomal protein bL21 family. In terms of assembly, part of the 50S ribosomal subunit. Contacts protein L20.

Functionally, this protein binds to 23S rRNA in the presence of protein L20. The protein is Large ribosomal subunit protein bL21 of Bradyrhizobium diazoefficiens (strain JCM 10833 / BCRC 13528 / IAM 13628 / NBRC 14792 / USDA 110).